The chain runs to 404 residues: Imidazolonepropionase (404 aa).

His73 and His75 together coordinate Fe(3+). Residues His73 and His75 each coordinate Zn(2+). The 4-imidazolone-5-propanoate site is built by Arg82, Tyr145, and His178. Tyr145 is a binding site for N-formimidoyl-L-glutamate. His243 is a binding site for Fe(3+). His243 lines the Zn(2+) pocket. Residue Gln246 participates in 4-imidazolone-5-propanoate binding. Asp318 contributes to the Fe(3+) binding site. Asp318 is a binding site for Zn(2+). 2 residues coordinate N-formimidoyl-L-glutamate: Asn320 and Gly322. Residue Ser323 participates in 4-imidazolone-5-propanoate binding.

It belongs to the metallo-dependent hydrolases superfamily. HutI family. Zn(2+) is required as a cofactor. Requires Fe(3+) as cofactor.

It is found in the cytoplasm. It catalyses the reaction 4-imidazolone-5-propanoate + H2O = N-formimidoyl-L-glutamate. It functions in the pathway amino-acid degradation; L-histidine degradation into L-glutamate; N-formimidoyl-L-glutamate from L-histidine: step 3/3. In terms of biological role, catalyzes the hydrolytic cleavage of the carbon-nitrogen bond in imidazolone-5-propanoate to yield N-formimidoyl-L-glutamate. It is the third step in the universal histidine degradation pathway. This chain is Imidazolonepropionase, found in Bradyrhizobium diazoefficiens (strain JCM 10833 / BCRC 13528 / IAM 13628 / NBRC 14792 / USDA 110).